We begin with the raw amino-acid sequence, 291 residues long: Polyamine aminopropyltransferase (291 aa).

One can recognise a PABS domain in the interval proline 5 to leucine 245. Position 36 (glutamine 36) interacts with S-methyl-5'-thioadenosine. Spermidine contacts are provided by histidine 67 and glutamate 91. S-methyl-5'-thioadenosine-binding positions include aspartate 111 and aspartate 143 to glycine 144. Aspartate 164 acts as the Proton acceptor in catalysis.

This sequence belongs to the spermidine/spermine synthase family. Homodimer or homotetramer.

Its subcellular location is the cytoplasm. It carries out the reaction S-adenosyl 3-(methylsulfanyl)propylamine + putrescine = S-methyl-5'-thioadenosine + spermidine + H(+). It participates in amine and polyamine biosynthesis; spermidine biosynthesis; spermidine from putrescine: step 1/1. Catalyzes the irreversible transfer of a propylamine group from the amino donor S-adenosylmethioninamine (decarboxy-AdoMet) to putrescine (1,4-diaminobutane) to yield spermidine. In Pyrobaculum islandicum (strain DSM 4184 / JCM 9189 / GEO3), this protein is Polyamine aminopropyltransferase.